Here is a 340-residue protein sequence, read N- to C-terminus: Immunoglobulin-binding protein 1 (340 aa).

Positions 47-61 (LELLEKAAGMLSQLD) constitute a UIM domain. The interaction with PPP2CA stretch occupies residues 99–203 (RLDHLQRARE…YLLHLRRWIG (105 aa)). Disordered regions lie at residues 221-242 (DKDSPREESACQSSLPEKPPMK) and 281-340 (LPDR…QNMG). Positions 226-291 (REESACQSSL…PDRGIAKPPS (66 aa)) are interaction with MID1. Lysine 242 is modified (N6-acetyllysine). Residues 292 to 301 (ADFQRAAQQQ) show a composition bias toward low complexity. Positions 302–312 (EDQEQKDEENE) are enriched in acidic residues. A compositionally biased stretch (basic and acidic residues) spans 313–330 (EKALHRMREWDDWKDTHP).

It belongs to the IGBP1/TAP42 family. Interacts with partially folded PPP2CA, but not with the fully active protein. Interacts with PPP2CB, and with PP4 and PP6. Interacts with MID1 and MID2. Interacts with ubiquitin. In terms of processing, phosphorylated. Post-translationally, monoubiquitination by MID1 triggers calpain-mediated cleavage and switches IGBP1 activity from protective to destructive.

Its subcellular location is the cytoplasm. Its function is as follows. Associated to surface IgM-receptor; may be involved in signal transduction. Involved in regulation of the catalytic activity of the phosphatases PP2A, PP4 and PP6 by protecting their partially folded catalytic subunits from degradative polyubiquitination until they associate with regulatory subunits. The polypeptide is Immunoglobulin-binding protein 1 (Igbp1) (Rattus norvegicus (Rat)).